The following is a 333-amino-acid chain: tRNA N6-adenosine threonylcarbamoyltransferase (333 aa).

Fe cation-binding residues include H111 and H115. Substrate is bound by residues 134–138 (LVSGG), D167, G180, and N272. D300 contributes to the Fe cation binding site.

This sequence belongs to the KAE1 / TsaD family. The cofactor is Fe(2+).

It localises to the cytoplasm. It carries out the reaction L-threonylcarbamoyladenylate + adenosine(37) in tRNA = N(6)-L-threonylcarbamoyladenosine(37) in tRNA + AMP + H(+). Functionally, required for the formation of a threonylcarbamoyl group on adenosine at position 37 (t(6)A37) in tRNAs that read codons beginning with adenine. Is involved in the transfer of the threonylcarbamoyl moiety of threonylcarbamoyl-AMP (TC-AMP) to the N6 group of A37, together with TsaE and TsaB. TsaD likely plays a direct catalytic role in this reaction. The sequence is that of tRNA N6-adenosine threonylcarbamoyltransferase from Hamiltonella defensa subsp. Acyrthosiphon pisum (strain 5AT).